The sequence spans 1021 residues: Contactin-1 (1021 aa).

A signal peptide spans 1-20 (MKTPLLVSHLLLISLTSCLG). Ig-like C2-type domains lie at 41-131 (PIFE…ATLS), 137-223 (PFPP…KSVF), 241-326 (PADI…ARIY), 331-407 (PEWV…AELK), 413-500 (PTFE…GTLV), and 504-603 (PTRI…LVVR). 2 cysteine pairs are disulfide-bonded: Cys-65–Cys-114 and Cys-158–Cys-211. Residues Asn-208 and Asn-258 are each glycosylated (N-linked (GlcNAc...) asparagine). Cysteines 263 and 310 form a disulfide. N-linked (GlcNAc...) asparagine glycosylation occurs at Asn-338. 2 disulfide bridges follow: Cys-352/Cys-391 and Cys-436/Cys-484. N-linked (GlcNAc...) asparagine glycans are attached at residues Asn-457, Asn-473, Asn-494, and Asn-521. A disulfide bond links Cys-526 and Cys-585. N-linked (GlcNAc...) asparagine glycosylation is present at Asn-593. 4 Fibronectin type-III domains span residues 608 to 706 (PPGG…TDGA), 711 to 808 (APSD…SAQD), 813 to 908 (APTE…APPS), and 909 to 1002 (QPPR…TLSS). The tract at residues 695 to 719 (SIPSNRIKTDGAAPNVAPSDVGGGG) is disordered. The N-linked (GlcNAc...) asparagine glycan is linked to Asn-935. Ser-1001 carries GPI-anchor amidated serine lipidation. Positions 1002 to 1021 (SGLLSLLLPSLGFLVFYSEF) are cleaved as a propeptide — removed in mature form.

It belongs to the immunoglobulin superfamily. Contactin family. As to quaternary structure, monomer. Interacts with NOTCH1. Interacts with CNTNAP1 in cis form and TNR. Binds to the carbonic-anhydrase like domain of PTPRZ1. Detected in a complex with NRCAM and PTPRB. Interacts with TASOR. Expressed by neurons, oligodendrocytes and their progenitors (at protein level). Myelination regulates the expression being down-regulated when neurons are in contact with Schwann cells.

The protein localises to the cell membrane. Functionally, contactins mediate cell surface interactions during nervous system development. Involved in the formation of paranodal axo-glial junctions in myelinated peripheral nerves and in the signaling between axons and myelinating glial cells via its association with CNTNAP1. Participates in oligodendrocytes generation by acting as a ligand of NOTCH1. Its association with NOTCH1 promotes NOTCH1 activation through the released notch intracellular domain (NICD) and subsequent translocation to the nucleus. Interaction with TNR induces a repulsion of neurons and an inhibition of neurite outgrowth. This Rattus norvegicus (Rat) protein is Contactin-1 (Cntn1).